We begin with the raw amino-acid sequence, 436 residues long: 3-ketoacyl-CoA thiolase (436 aa).

Residue Cys-99 is the Acyl-thioester intermediate of the active site. Catalysis depends on proton acceptor residues His-392 and Cys-422.

Belongs to the thiolase-like superfamily. Thiolase family. Heterotetramer of two alpha chains (FadJ) and two beta chains (FadI).

It is found in the cytoplasm. It catalyses the reaction an acyl-CoA + acetyl-CoA = a 3-oxoacyl-CoA + CoA. The protein operates within lipid metabolism; fatty acid beta-oxidation. Catalyzes the final step of fatty acid oxidation in which acetyl-CoA is released and the CoA ester of a fatty acid two carbons shorter is formed. In Salmonella schwarzengrund (strain CVM19633), this protein is 3-ketoacyl-CoA thiolase.